The chain runs to 956 residues: Translation initiation factor IF-2 (956 aa).

The interval phenylalanine 50 to proline 351 is disordered. Residues alanine 64 to alanine 95 show a composition bias toward pro residues. Composition is skewed to low complexity over residues proline 96–alanine 107 and proline 121–alanine 136. Residues alanine 146–threonine 155 show a composition bias toward basic and acidic residues. 2 stretches are compositionally biased toward gly residues: residues arginine 171–arginine 192 and arginine 206–glycine 234. The segment covering serine 235–proline 254 has biased composition (low complexity). Residues alanine 255–glycine 320 are compositionally biased toward gly residues. Basic residues predominate over residues valine 324–lysine 333. One can recognise a tr-type G domain in the interval alanine 448–leucine 619. The G1 stretch occupies residues glycine 457–threonine 464. Residue glycine 457–threonine 464 participates in GTP binding. Residues glycine 482–histidine 486 form a G2 region. The tract at residues aspartate 507–glycine 510 is G3. GTP is bound by residues aspartate 507–histidine 511 and asparagine 561–aspartate 564. A G4 region spans residues asparagine 561 to aspartate 564. Positions serine 597 to lysine 599 are G5.

The protein belongs to the TRAFAC class translation factor GTPase superfamily. Classic translation factor GTPase family. IF-2 subfamily.

The protein localises to the cytoplasm. In terms of biological role, one of the essential components for the initiation of protein synthesis. Protects formylmethionyl-tRNA from spontaneous hydrolysis and promotes its binding to the 30S ribosomal subunits. Also involved in the hydrolysis of GTP during the formation of the 70S ribosomal complex. The sequence is that of Translation initiation factor IF-2 from Beutenbergia cavernae (strain ATCC BAA-8 / DSM 12333 / CCUG 43141 / JCM 11478 / NBRC 16432 / NCIMB 13614 / HKI 0122).